The primary structure comprises 290 residues: 3-keto-disaccharide hydrolase (290 aa).

The N-terminal stretch at 1–19 is a signal peptide; that stretch reads MKKVFYPLACCLAAGVLVS. Cysteine 20 carries the N-palmitoyl cysteine lipid modification. The S-diacylglycerol cysteine moiety is linked to residue cysteine 20.

It is found in the cell membrane. It catalyses the reaction 3-dehydro-alpha,alpha-trehalose + H2O = 3-dehydro-D-glucose + D-glucose. Functionally, 3-keto-disaccharide hydrolase that preferentially hydrolyzes 3-keto-trehalose (3-dehydro-alpha,alpha-trehalose). Important for disaccharide utilization in the human gut. Also shows hydrolysis activity with the glucosinolates glucoraphanin or glucobrassicin, but with much lower efficiency. This Bacteroides thetaiotaomicron (strain ATCC 29148 / DSM 2079 / JCM 5827 / CCUG 10774 / NCTC 10582 / VPI-5482 / E50) protein is 3-keto-disaccharide hydrolase.